The primary structure comprises 440 residues: Cyclic dipeptide prenyltransferase (440 aa).

Residues 1–33 (MDGEMTASPPDISACDTSAVDEQTGQSGQSQAP) are disordered. Polar residues predominate over residues 20 to 32 (VDEQTGQSGQSQA). The substrate site is built by Thr108 and Glu116. Dimethylallyl diphosphate contacts are provided by Arg129, Lys219, and Tyr221. Phe223 is a substrate binding site. Residues Lys286, Tyr288, Tyr366, Tyr431, and Tyr435 each coordinate dimethylallyl diphosphate.

The protein belongs to the tryptophan dimethylallyltransferase family.

It carries out the reaction harmol + dimethylallyl diphosphate = 6-(3-dimethylallyl)harmol + diphosphate. The enzyme catalyses an N-terminal L-tryptophanyl-L-alpha-aminoacyl-[peptide] + H2O = an N-terminal L-alpha-aminoacyl-[peptide] + L-tryptophan. The catalysed reaction is (R)-benzodiazepinedione + dimethylallyl diphosphate = (2S,3R,11R)-aszonalenin + diphosphate. It catalyses the reaction (S)-benzodiazepinedione + dimethylallyl diphosphate = (2S,3R,11S)-aszonalenin + diphosphate. Its function is as follows. Prenyltransferase that catalyzes reverse prenylation at position N-1 of tryptophan-containing cyclic dipeptides. Accepts only dimethylallyl diphosphate (DMAPP) as the prenyl donor but shows broad substrate specificities toward its aromatic substrates. Also shows tryptophan aminopeptidase activity with preference for linear peptides containing a tryptophanyl moiety at the N-terminus. This Aspergillus fumigatus (Neosartorya fumigata) protein is Cyclic dipeptide prenyltransferase.